Reading from the N-terminus, the 123-residue chain is Potassium voltage-gated channel subfamily E member 2 (123 aa).

2 N-linked (GlcNAc...) asparagine glycosylation sites follow: asparagine 6 and asparagine 29. Residues 49–69 form a helical membrane-spanning segment; sequence VILYLMVMIGMFSFIVVAILV. At 70-123 the chain is on the cytoplasmic side; it reads STVKSKRREHSQHPYHQYIVEDWQEKYKSQILHLEDSKATIHENMGATGFTVSP.

The protein belongs to the potassium channel KCNE family. As to quaternary structure, interacts with KCNB1. Associates with KCNH2/ERG1. May associate with KCNQ2 and KCNQ3. Associates with HCN1 and probably HCN2. Heteromultimer with KCNC2. Interacts with KCNC2. Interacts with KCNQ1. Forms a heterooligomer complex with KCNQ1 that targets to the membrane raft and leading to currents with an apparently instantaneous activation, a rapid deactivation process and a linear current-voltage relationship and decreases the amplitude of the outward current.

The protein localises to the cell membrane. It localises to the apical cell membrane. Functionally, ancillary protein that functions as a regulatory subunit of the voltage-gated potassium (Kv) channel complex composed of pore-forming and potassium-conducting alpha subunits and of regulatory beta subunits. KCNE2 beta subunit modulates the gating kinetics and enhances stability of the channel complex. Alters the gating of the delayed rectifier Kv channel containing KCNB1 alpha subunit. Associates with KCNH2/HERG alpha subunit Kv channel to form the rapidly activating component of the delayed rectifying potassium current (IKr) in heart. May associate with KCNQ2 and/or KCNQ3 alpha subunits to modulate the native M-type current. May associate with HCN1 and HCN2 channel subunits to increase potassium current. Forms a heterooligomer complex with KCNQ1/KVLQT1 alpha subunits which leads to currents with an apparently instantaneous activation, a rapid deactivation process and a linear current-voltage relationship and decreases the amplitude of the outward current. KCNQ1-KCNE2 channel associates with Na(+)-coupled myo-inositol symporter in the apical membrane of choroid plexus epithelium and regulates the myo-inositol gradient between blood and cerebrospinal fluid with an impact on neuron excitability. The chain is Potassium voltage-gated channel subfamily E member 2 from Mus musculus (Mouse).